A 73-amino-acid polypeptide reads, in one-letter code: uncharacterized protein (73 aa).

This is an uncharacterized protein from Schizosaccharomyces pombe (strain 972 / ATCC 24843) (Fission yeast).